Reading from the N-terminus, the 92-residue chain is Evasin P942 (92 aa).

An N-terminal signal peptide occupies residues 1–26 (MEVKTFAFLQIAVLIALGLHLAPAGS). Cystine bridges form between cysteine 44–cysteine 63, cysteine 48–cysteine 65, and cysteine 59–cysteine 76. N-linked (GlcNAc...) asparagine glycosylation occurs at asparagine 47. Asparagine 70 carries an N-linked (GlcNAc...) asparagine glycan.

The protein localises to the secreted. Its function is as follows. Salivary chemokine-binding protein which binds to host chemokines CXCL1, CXCL2, CXCL3, CXCL4, CXCL5, CXCL6, CXCL10, CXCL11 and CXCL13. The chain is Evasin P942 from Ixodes ricinus (Common tick).